The sequence spans 186 residues: ADP-ribosylation factor-like protein 8B (186 aa).

The segment at residues 1–19 (MLALISRLLDWFRSLFWKE) is an intramembrane region (note=Mediates targeting to membranes). GTP is bound by residues 29-35 (QYSGKTT), 71-75 (DIGGQ), and 130-133 (NKRD). Lys141 is covalently cross-linked (Glycyl lysine isopeptide (Lys-Gly) (interchain with G-Cter in ubiquitin)).

It belongs to the small GTPase superfamily. Arf family. As to quaternary structure, interacts with tubulin. Interacts with BORCS5; recruits ARL8B to lysosomes. Interacts with VPS41; the interaction mediates the recruitment of the HOPS complex to lysosomes. Interacts (GTP-bound form) with PLEKHM2 (via RUN domain); the interaction is required to recruit the motor protein kinesin-1 on lysosomes. Interacts (GTP-bound form) with PLEKHM1 (via RUN domain); the interaction is required for PLEKHM1 localization to lysosomes and for ARL8B function in delivery and degradation of endocytic and autophagic cargo in lysosomes. PLEKHM1 and PLEKHM2 compete for interaction with ARL8B. Interacts (GTP-bound form) with RUFY1; the interaction is required for RUFY1 endosomal location. When GTP-bound, interacts with RUFY3 and RUFY4, but not with RUFY1, nor RUFY2. In terms of processing, ubiquitinated at Lys-141 by RNF167, leading to its degradation.

Its subcellular location is the late endosome membrane. It is found in the lysosome membrane. The protein resides in the cytoplasm. The protein localises to the cytoskeleton. It localises to the spindle. Its subcellular location is the cell projection. It is found in the axon. The protein resides in the synapse. The protein localises to the cytolytic granule membrane. It localises to the early endosome membrane. The catalysed reaction is GTP + H2O = GDP + phosphate + H(+). Functionally, small GTPase which cycles between active GTP-bound and inactive GDP-bound states. In its active state, binds to a variety of effector proteins playing a key role in the regulation of lysosomal positioning which is important for nutrient sensing, natural killer cell-mediated cytotoxicity and antigen presentation. Along with its effectors, orchestrates lysosomal transport and fusion. Localizes specifically to lysosomal membranes and mediates anterograde lysosomal motility by recruiting PLEKHM2, which in turn recruits the motor protein kinesin-1 on lysosomes. Required for lysosomal and cytolytic granule exocytosis. Critical factor involved in NK cell-mediated cytotoxicity. Drives the polarization of cytolytic granules and microtubule-organizing centers (MTOCs) toward the immune synapse between effector NK lymphocytes and target cells. In neurons, mediates the anterograde axonal long-range transport of presynaptic lysosome-related vesicles required for presynaptic biogenesis and synaptic function. Also acts as a regulator of endosome to lysosome trafficking pathways of special significance for host defense. Recruits RUFY1 onto early endosomes regulating endosomes to trans-Golgi network proteins retrieval. Regulates cargo trafficking to lysosomes by binding to PLEKHM1 and recruiting the HOPS subunit VPS41, resulting in functional assembly of the HOPS complex on lysosomal membranes. Plays an important role in cargo delivery to lysosomes for antigen presentation and microbial killing. Directs the intersection of CD1d with lipid antigens in lysosomes, and plays a role in intersecting phagosomes with lysosomes to generate phagolysosomes that kill microbes. Involved in the process of MHC II presentation. Regulates the delivery of antigens to lysosomes and the formation of MHC II-peptide complexes through the recruitment of the HOPS complex to lysosomes allowing the fusion of late endosomes to lysosomes. May play a role in chromosome segregation. The protein is ADP-ribosylation factor-like protein 8B (ARL8B) of Pongo abelii (Sumatran orangutan).